The sequence spans 706 residues: Elongation factor G (706 aa).

Residues 15 to 291 enclose the tr-type G domain; that stretch reads LKTRNIGISA…GVLDYLASPV (277 aa). Residues 24 to 31, 91 to 95, and 145 to 148 each bind GTP; these read AHIDSGKT, DTPGH, and NKLD.

Belongs to the TRAFAC class translation factor GTPase superfamily. Classic translation factor GTPase family. EF-G/EF-2 subfamily.

It localises to the cytoplasm. Its function is as follows. Catalyzes the GTP-dependent ribosomal translocation step during translation elongation. During this step, the ribosome changes from the pre-translocational (PRE) to the post-translocational (POST) state as the newly formed A-site-bound peptidyl-tRNA and P-site-bound deacylated tRNA move to the P and E sites, respectively. Catalyzes the coordinated movement of the two tRNA molecules, the mRNA and conformational changes in the ribosome. The polypeptide is Elongation factor G (Leptospira borgpetersenii serovar Hardjo-bovis (strain JB197)).